We begin with the raw amino-acid sequence, 1226 residues long: 3-hydroxy-3-methylglutaryl-coenzyme A reductase (1226 aa).

5 helical membrane-spanning segments follow: residues 17–37, 224–244, 252–272, 337–357, and 373–393; these read IETI…ILSG, ILVV…LFLA, FWLS…TLPM, VGNM…VGVN, and LLAM…TIMV. Residues 223–391 form the SSD domain; the sequence is DILVVLTGYI…FTLYTAVLTI (169 aa). The segment at 428–449 is disordered; that stretch reads LSRKSSKQSVTEPETTKNLRQR. Over residues 434–445 the composition is skewed to polar residues; sequence KQSVTEPETTKN. The helical transmembrane segment at 481–501 threads the bilayer; it reads LLLIASFLTLHILNFCTTLTS. Disordered regions lie at residues 683 to 702 and 722 to 742; these read APAP…PPPL and LPIR…EVEP. A compositionally biased stretch (pro residues) spans 685–702; the sequence is APAPAPEPEPPVNRPPPL. Glutamate 869 (charge relay system) is an active-site residue. CoA is bound at residue 875–881; that stretch reads STSRGCK. Residues 936–938 and 963–971 contribute to the NADP(+) site; these read SRF and DAMGMNMIS. The active-site Charge relay system is lysine 1001. 1030–1032 is a binding site for CoA; the sequence is VLK. Aspartate 1077 acts as the Charge relay system in catalysis. Residues 1150–1170 form a helical membrane-spanning segment; sequence IIASAVMAGELSLISALAAGH. A CoA-binding site is contributed by 1174-1175; that stretch reads AH. Histidine 1175 functions as the Proton donor in the catalytic mechanism. Position 1179–1180 (1179–1180) interacts with NADP(+); sequence NR. Positions 1182 to 1226 are disordered; the sequence is QLNTPMPSRPHTPGPEDVSHVQQLPTPSASDDKGVTAQGYVVEAK. Positions 1201 to 1210 are enriched in polar residues; the sequence is HVQQLPTPSA.

It belongs to the HMG-CoA reductase family.

It is found in the endoplasmic reticulum membrane. It carries out the reaction (R)-mevalonate + 2 NADP(+) + CoA = (3S)-3-hydroxy-3-methylglutaryl-CoA + 2 NADPH + 2 H(+). Its pathway is metabolic intermediate biosynthesis; (R)-mevalonate biosynthesis; (R)-mevalonate from acetyl-CoA: step 3/3. Its function is as follows. HMG-CoA reductase; part of the first module of ergosterol biosynthesis pathway that includes the early steps of the pathway, conserved across all eukaryotes, and which results in the formation of mevalonate from acetyl-coenzyme A (acetyl-CoA). This module also plays a key role in the biosynthesis of triterpenes such as ganoderic acids (GA), a group of highly oxygenated lanostane-type triterpenoids which are well recognized as a main group of unique bioactive compounds in the medicinal mushroom Ganoderma lucidum. In this module, the acetyl-CoA acetyltransferase catalyzes the formation of acetoacetyl-CoA. The hydroxymethylglutaryl-CoA synthase HMGS then condenses acetyl-CoA with acetoacetyl-CoA to form HMG-CoA. The rate-limiting step of the early module is the reduction to mevalonate by the 3-hydroxy-3-methylglutaryl-coenzyme A (HMG-CoA) reductase. This chain is 3-hydroxy-3-methylglutaryl-coenzyme A reductase, found in Ganoderma lucidum (Ling zhi medicinal fungus).